The chain runs to 121 residues: MALDTANIIEQLKGASILELNDLVHAIEEEFGVTAAAPVAAAGAAGGAEEAKSSFDVELTSAGTEKVKVIKIVKEATGASLLDAKKTVDGAPVVLKEGLSEDEANELKAKLEEVGATVTLK.

It belongs to the bacterial ribosomal protein bL12 family. As to quaternary structure, homodimer. Part of the ribosomal stalk of the 50S ribosomal subunit. Forms a multimeric L10(L12)X complex, where L10 forms an elongated spine to which 2 to 4 L12 dimers bind in a sequential fashion. Binds GTP-bound translation factors.

In terms of biological role, forms part of the ribosomal stalk which helps the ribosome interact with GTP-bound translation factors. Is thus essential for accurate translation. The protein is Large ribosomal subunit protein bL12 of Lactobacillus delbrueckii subsp. bulgaricus (strain ATCC BAA-365 / Lb-18).